The following is a 321-amino-acid chain: Chemotaxis protein CheV1 (321 aa).

The 159-residue stretch at 19–177 folds into the CheW-like domain; the sequence is ELQLLCFRLG…IEKMLIDVFP (159 aa). The Response regulatory domain maps to 198–319; the sequence is CVLLADDSPS…IQRVVKQFLE (122 aa). Aspartate 252 carries the post-translational modification 4-aspartylphosphate.

In terms of biological role, plays an essential role in chemotaxis signal transduction system in order to colonize the host stomach. May act as a phosphate sink to control the flow of phosphate to CheAY. The chain is Chemotaxis protein CheV1 from Helicobacter pylori (strain ATCC 700392 / 26695) (Campylobacter pylori).